Consider the following 90-residue polypeptide: Probable Fe(2+)-trafficking protein (90 aa).

It belongs to the Fe(2+)-trafficking protein family.

In terms of biological role, could be a mediator in iron transactions between iron acquisition and iron-requiring processes, such as synthesis and/or repair of Fe-S clusters in biosynthetic enzymes. The sequence is that of Probable Fe(2+)-trafficking protein from Thioalkalivibrio sulfidiphilus (strain HL-EbGR7).